The following is a 177-amino-acid chain: SKP1-like protein 15 (177 aa).

The tract at residues Ile-108–Glu-167 is interaction with the F-box domain of F-box proteins.

It belongs to the SKP1 family. As to quaternary structure, part of a SCF (SKP1-cullin-F-box) protein ligase complex. As to expression, expressed at low levels in seedlings and leaves.

The protein localises to the nucleus. It participates in protein modification; protein ubiquitination. Its function is as follows. Involved in ubiquitination and subsequent proteasomal degradation of target proteins. Together with CUL1, RBX1 and a F-box protein, it forms a SCF E3 ubiquitin ligase complex. The functional specificity of this complex depends on the type of F-box protein. In the SCF complex, it serves as an adapter that links the F-box protein to CUL1. This chain is SKP1-like protein 15 (ASK15), found in Arabidopsis thaliana (Mouse-ear cress).